A 79-amino-acid polypeptide reads, in one-letter code: UPF0154 protein SUB0399 (79 aa).

A helical transmembrane segment spans residues 4 to 24 (AIWILLIVLALIGGLFGGVFI).

It belongs to the UPF0154 family.

It is found in the cell membrane. This Streptococcus uberis (strain ATCC BAA-854 / 0140J) protein is UPF0154 protein SUB0399.